Here is a 230-residue protein sequence, read N- to C-terminus: Thymidylate synthase 1 (230 aa).

92-93 lines the dUMP pocket; it reads RR. The active-site Nucleophile is the Cys-112. DUMP-binding positions include 132 to 135, Asn-143, and 173 to 175; these read RSND and HVY. Asp-135 is a binding site for (6R)-5,10-methylene-5,6,7,8-tetrahydrofolate.

This sequence belongs to the thymidylate synthase family. Bacterial-type ThyA subfamily. In terms of assembly, homodimer.

The protein resides in the cytoplasm. It carries out the reaction dUMP + (6R)-5,10-methylene-5,6,7,8-tetrahydrofolate = 7,8-dihydrofolate + dTMP. The protein operates within pyrimidine metabolism; dTTP biosynthesis. In terms of biological role, catalyzes the reductive methylation of 2'-deoxyuridine-5'-monophosphate (dUMP) to 2'-deoxythymidine-5'-monophosphate (dTMP) while utilizing 5,10-methylenetetrahydrofolate (mTHF) as the methyl donor and reductant in the reaction, yielding dihydrofolate (DHF) as a by-product. This enzymatic reaction provides an intracellular de novo source of dTMP, an essential precursor for DNA biosynthesis. This is Thymidylate synthase 1 from Bacillus amyloliquefaciens (Bacillus velezensis).